The chain runs to 128 residues: 3-aminoacrylate deaminase RutC (128 aa).

This sequence belongs to the RutC family.

It catalyses the reaction (Z)-3-aminoacrylate + H2O + H(+) = 3-oxopropanoate + NH4(+). Functionally, involved in pyrimidine catabolism. Catalyzes the deamination of 3-aminoacrylate to malonic semialdehyde, a reaction that can also occur spontaneously. RutC may facilitate the reaction and modulate the metabolic fitness, rather than catalyzing essential functions. This is 3-aminoacrylate deaminase RutC from Pantoea ananatis (strain LMG 20103).